Here is a 440-residue protein sequence, read N- to C-terminus: Xylose isomerase (440 aa).

Active-site residues include histidine 101 and aspartate 104. Mg(2+) is bound by residues glutamate 232, glutamate 268, histidine 271, aspartate 296, aspartate 307, aspartate 309, and aspartate 339.

This sequence belongs to the xylose isomerase family. In terms of assembly, homotetramer. Requires Mg(2+) as cofactor.

The protein localises to the cytoplasm. The catalysed reaction is alpha-D-xylose = alpha-D-xylulofuranose. This chain is Xylose isomerase, found in Salmonella paratyphi B (strain ATCC BAA-1250 / SPB7).